Consider the following 91-residue polypeptide: Small ribosomal subunit protein bS20 (91 aa).

This sequence belongs to the bacterial ribosomal protein bS20 family.

Functionally, binds directly to 16S ribosomal RNA. The polypeptide is Small ribosomal subunit protein bS20 (Wolinella succinogenes (strain ATCC 29543 / DSM 1740 / CCUG 13145 / JCM 31913 / LMG 7466 / NCTC 11488 / FDC 602W) (Vibrio succinogenes)).